A 1828-amino-acid chain; its full sequence is AT-rich interactive domain-containing protein 2 (1828 aa).

N-acetylalanine is present on alanine 2. A Phosphoserine modification is found at serine 4. Glycyl lysine isopeptide (Lys-Gly) (interchain with G-Cter in SUMO2) cross-links involve residues lysine 7, lysine 15, and lysine 119. An ARID domain is found at 13-105 (RRKGLAFLDE…YLEKYEKVHH (93 aa)). Positions 313-317 (LRFLL) match the LXXLL motif. Positions 524–603 (ACQWLNAHFE…IHVIGVKRRA (80 aa)) form a DNA-binding region, RFX-type winged-helix. Residue lysine 555 forms a Glycyl lysine isopeptide (Lys-Gly) (interchain with G-Cter in SUMO2) linkage. Phosphoserine occurs at positions 631 and 635. Threonine 653 is subject to Phosphothreonine. A Phosphoserine modification is found at serine 689. Phosphothreonine is present on threonine 692. Disordered stretches follow at residues 824–843 (TSPQ…SQPQ), 962–1028 (LTGQ…QVQV), 1245–1339 (KEAT…EPVD), 1360–1462 (KGDG…RPSV), 1483–1503 (HSGP…TNGT), and 1566–1618 (SAAQ…HADP). Polar residues predominate over residues 987 to 1011 (AMSSSSTLQSQGPPPTVSQMLSVKR). Residues 1012–1028 (QQQQQHSPAAPAQQVQV) are compositionally biased toward low complexity. Basic and acidic residues predominate over residues 1245 to 1259 (KEATGLHVHERKIEV). A compositionally biased stretch (polar residues) spans 1267–1283 (RGTTNTSNGDTSESELQ). Position 1294 is a phosphoserine (serine 1294). Polar residues-rich tracts occupy residues 1295–1320 (DSSL…SNGP) and 1366–1379 (LSKN…SNHV). Serine 1385 carries the phosphoserine modification. Composition is skewed to polar residues over residues 1390-1400 (QGTSGATQQDT) and 1419-1428 (GSPSTSSMQE). Low complexity predominate over residues 1453-1462 (SDVPQQRPSV). Serine 1491 is subject to Phosphoserine. Composition is skewed to polar residues over residues 1491-1503 (SALS…TNGT) and 1567-1586 (AAQQ…APQN). A compositionally biased stretch (low complexity) spans 1594-1614 (AVQVQGQPSSSQPSPVSASSQ). The segment at 1626 to 1651 (FMCLWQSCKKWFQTPSQVFYHAATEH) adopts a C2H2-type zinc-finger fold. Glycyl lysine isopeptide (Lys-Gly) (interchain with G-Cter in SUMO2) cross-links involve residues lysine 1695, lysine 1710, and lysine 1725. The tract at residues 1697–1726 (DEPGQVANQKSSTKQPTVGGTGSAPRAQKA) is disordered. Polar residues predominate over residues 1702–1714 (VANQKSSTKQPTV).

The protein belongs to the RFX family. Component of the SWI/SNF-B (PBAF) chromatin remodeling complex, at least composed of SMARCA4/BRG1, SMARCB1/BAF47/SNF5, ACTL6A/BAF53A or ACTL6B/BAF53B, SMARCE1/BAF57, SMARCD1/BAF60A, SMARCD2/BAF60B, perhaps SMARCD3/BAF60C, SMARCC1/BAF155, SMARCC2/BAF170, PBRM1/BAF180, ARID2/BAF200 and actin. Interacts with SRF. Forms complexes with SRF and SRF cofactors MYOCD, NKX2-5 and SRFBP1. As to expression, highly expressed in testis, expressed in heart, liver and kidney.

The protein localises to the nucleus. Involved in transcriptional activation and repression of select genes by chromatin remodeling (alteration of DNA-nucleosome topology). Required for the stability of the SWI/SNF chromatin remodeling complex SWI/SNF-B (PBAF). May be involved in targeting the complex to different genes. May be involved in regulating transcriptional activation of cardiac genes. The protein is AT-rich interactive domain-containing protein 2 of Mus musculus (Mouse).